The chain runs to 349 residues: Mitochondrial carrier protein SCaMC-3L (349 aa).

4 helical membrane passes run 88 to 104 (GALW…GAVS), 149 to 168 (GNGI…FSVF), 188 to 205 (LLAG…INPM), and 243 to 261 (YLPN…LAVY). Solcar repeat units lie at residues 88-174 (GALW…CKNY) and 182-267 (PPFQ…LNCL).

Belongs to the mitochondrial carrier (TC 2.A.29) family.

The protein resides in the mitochondrion inner membrane. The catalysed reaction is Mg(2+)(out) + phosphate(in) + ATP(out) = Mg(2+)(in) + phosphate(out) + ATP(in). It catalyses the reaction ADP(out) + phosphate(in) + H(+)(out) = ADP(in) + phosphate(out) + H(+)(in). Calcium-independent ATP-Mg/Pi exchanger that catalyzes the electroneutral exchange of Mg-ATP or free ADP against an hydrogenphosphate and participates in the net transport of adenine nucleotides across the mitochondria inner membrane. The protein is Mitochondrial carrier protein SCaMC-3L of Bos taurus (Bovine).